The chain runs to 253 residues: Transmembrane protein 51 (253 aa).

2 helical membrane passes run 17-37 (IGLG…VPGF) and 65-85 (VAYV…CLSI). 2 disordered regions span residues 93-133 (QGED…YVPS) and 164-253 (LTGL…RPPD). Residues 113–124 (EDSQEEEEEDEE) are compositionally biased toward acidic residues. A Phosphoserine modification is found at Ser115. Residues 164–176 (LTGLDETTPTSTR) are compositionally biased toward polar residues. Residues Ser182 and Ser192 each carry the phosphoserine modification. Basic residues predominate over residues 194-205 (LAKRLKPLKVRR). Positions 206 to 217 (IKSEKLHLKDFR) are enriched in basic and acidic residues. Residues 224-238 (NVPPPSIEPLTPPPQ) are compositionally biased toward pro residues. A compositionally biased stretch (basic and acidic residues) spans 242-253 (VQEKAPDTRPPD).

It is found in the membrane. In Homo sapiens (Human), this protein is Transmembrane protein 51 (TMEM51).